Reading from the N-terminus, the 319-residue chain is Transcription factor VBP (319 aa).

Composition is skewed to low complexity over residues 1–31 (MPGR…GAVA) and 143–158 (ASAS…STAV). 2 disordered regions span residues 1 to 35 (MPGR…QQPE) and 139 to 186 (EKEP…DPDC). Polar residues predominate over residues 159–180 (YQQSEAASSTESPPQNERNTPS). Residues 243 to 306 (DEKYWTRRKK…GRCKNIVSKY (64 aa)) enclose the bZIP domain. Residues 245–265 (KYWTRRKKNNVAAKRSRDARR) form a basic motif region. Residues 266–273 (LKENQITI) are leucine-zipper.

It belongs to the bZIP family. PAR subfamily. As to quaternary structure, binds DNA as a homodimer or a heterodimer. Exists as a stable dimer in the absence of DNA. In terms of tissue distribution, isoform 1 and isoform 3 are expressed in a variety of somatic tissues, including liver, heart, intestine, stomach and kidney. Both isoforms are also expressed in hepatoma (LMH) cells and in embryonic fibroblast cell lines. Isoform 2 and isoform 4 are expressed in adult heart and intestine.

It is found in the nucleus. Functionally, transcription factor that binds to and transactivates the vitellogenin II (VTG2) promoter. Binds to the palindromic sequence 5'-GTTTACATAAAC-3'. This is Transcription factor VBP (TEF) from Gallus gallus (Chicken).